The sequence spans 354 residues: Rhodopsin (354 aa).

At 1-36 (MNGTEGENFYIPMSNKTGVVRSPFDYPQYYLAEPWK) the chain is on the extracellular side. Residues Asn2 and Asn15 are each glycosylated (N-linked (GlcNAc...) asparagine). Residues 37–61 (FSVLAAYMFFLIIAGFPVNFLTLYV) form a helical membrane-spanning segment. Residues 62–73 (TIQHKKLRQPLN) lie on the Cytoplasmic side of the membrane. Residues 74 to 96 (YILLNLAVADLFMIFGGFPSTMI) form a helical membrane-spanning segment. The Extracellular portion of the chain corresponds to 97-110 (TSMNGYFVFGPSGC). Cysteines 110 and 187 form a disulfide. A helical membrane pass occupies residues 111 to 133 (NFEGFFATLGGEIGLWSLVVLAI). Positions 134-136 (ERY) match the 'Ionic lock' involved in activated form stabilization motif. Residues 134-152 (ERYVVVCKPMSNFRFGSQH) are Cytoplasmic-facing. Residues 153 to 173 (AFMGVGLTWIMAMACAFPPLV) form a helical membrane-spanning segment. The Extracellular segment spans residues 174 to 202 (GWSRYIPEGMQCSCGIDYYTLKPEVNNES). Asn200 carries an N-linked (GlcNAc...) asparagine glycan. A helical transmembrane segment spans residues 203-224 (FVIYMFVVHFSIPLTIIFFCYG). The Cytoplasmic portion of the chain corresponds to 225–252 (RLVCTVKEAAAQQQESETTQRAEREVTR). Residues 253-274 (MVIIMVIAFLICWLPYASVAFF) form a helical membrane-spanning segment. Over 275–286 (IFCNQGSEFGPI) the chain is Extracellular. Residues 287–308 (FMTIPAFFAKAASLYNPLIYIL) form a helical membrane-spanning segment. Position 296 is an N6-(retinylidene)lysine (Lys296). At 309-354 (MNKQFRNCMITTICCGKNPFEEEESTSASASKTEASSVSSSQVAPA) the chain is on the cytoplasmic side. S-palmitoyl cysteine attachment occurs at residues Cys322 and Cys323. A disordered region spans residues 333 to 354 (STSASASKTEASSVSSSQVAPA). The segment covering 334–354 (TSASASKTEASSVSSSQVAPA) has biased composition (low complexity).

This sequence belongs to the G-protein coupled receptor 1 family. Opsin subfamily. In terms of processing, phosphorylated on some or all of the serine and threonine residues present in the C-terminal region. Contains one covalently linked retinal chromophore.

The protein resides in the membrane. The protein localises to the cell projection. It is found in the cilium. It localises to the photoreceptor outer segment. In terms of biological role, photoreceptor required for image-forming vision at low light intensity. While most salt water fish species use retinal as chromophore, most freshwater fish use 3-dehydroretinal, or a mixture of retinal and 3-dehydroretinal. Light-induced isomerization of 11-cis to all-trans retinal triggers a conformational change that activates signaling via G-proteins. Subsequent receptor phosphorylation mediates displacement of the bound G-protein alpha subunit by arrestin and terminates signaling. This Scyliorhinus canicula (Small-spotted catshark) protein is Rhodopsin (rho).